The chain runs to 2387 residues: MLPPKSLSATKPKKWAPNLYELDSDLSEPDAVPGEGATDSEFFHQRFRNFLYVEFIGPRKTLLKLRNLCLDWLQPEIRTKEEIIEVLVLEQYLSILPERIKPWVYARKPETCEKLVALLEDYEAMYEPEDDNSSDTHSEGGMSRRAAESPPPRPALPCCSERERRRGRSRDMESRDRWPSVRSPRSRFHQRDLALPLAERAKEREHRRRDSLLDLDARSEEAVLYQDMVALTEDRKPQNPIQDNMENYRKLLSLGVQLAEDDGHSHMTQGHSARSKRSAYPSTSRGLKTAPETKKSAHRRGICEAESSHGVIMEKFIKDVARSSRSGRARESSERPHRLSRRAGGDWKEASFSRREAGASERGPEGGAFGGGGFSCGSDLVSKKRALERKRRYHFDAEGQGPVHDPRGGARKRPFECGGEARRAAKAAGASSLSAPPAAPSQPLDFGAMPYVCDECGRSFAVISEFVEHQIVHTRESLYEYGESFIHSAAVSEAQSRPEGARRSEGAQAAGLAEHRGGQAQEHLRGSGDEEQDEPFLPSPTFSELQKMYGKDKFYECKVCKETFLHSSALIEHQKIHSHEDREKERSTGAVRRTPMLGELQRACGKEKRYECKVCGETFHHSAALREHQKTHGRGSPSEGRARAFEETFIPGQSLKRRQKTYSKEKLYDFREGGDAFGRSSDFMEHQKIHSRKSYFDSRGYEKPLLHSMSMPGSQKSHTITRPPEDEDEEKAFTASSSPEDGQEARGYERSAYERAILHSLAAFRPPRGLREDGEPSTYLSGLRDPPQKTPAWESPYAGGRHSFFRSSVFYRASRPAPLDHLAGEGPSGWQRDGEASGPSSDGRQHQKARAKKKNIERKNYDASMMHSLHFGESQTFRPRERFYECLECGEFFVRSSELAEHQKIHNRKKLSGSKNYLRSVLRSLSSTDPQTSYQGQSVQMSYPQEAAQTSYAELAAQTSYAEEPAQTSYAVEPAQTSYAEEPAQTSYTEAPAEASYTEEPAQTSCIEEPAQTSYTNPAAETSYAEEPAQTSYTEAPAEASYTEEPAQTSCIEEPAQTSYTNPAAETSYTEEPAQTSYTEAPAEASGIEEPAQTNYTEESAEVSYTEEPSQTSCIEEPAQTSYTDPAAETSYTEEPAQTSYTQEPAQTSCTEEPAQTSCTEEPAQTSYTQEPAQTSYTKEPAEASYTEEPAQTSCIEEPAQTNYTKESAKASYTEEPAQTSYTDPAAETSYTEEPAQTNYTVESAEASYTEEPSQTSCIEEPAQTSYTDSAADTSCTEEPAQTSCTEEPAQTSYTQEPAQTSCTEEPAQTSCTEEPAQTSYTQEPAQTSCTEEPAQTSYTQEPAQTSCTEEPAQTSYTEEPAQTSYTEEPAQTSYTQEPAQTSCTEEPAQTSYTEEPAQTSYTEEPAQTSYTQEPAQTSYTEEPAQTSYTEEPAQTSYAQEPAQTSYAEEPAQTSYAEEPAQTSYAEEPAQTSYTQEPAQTNYTEEPAEASYTEEPAQTSYAEEPAQTSYPEEPAQTSYAEEPAQTSYAEEPAQTSYPEEPAQTSYTEEPAQTSYAKEPAQTSYPEEPAQTSYAEEPAQTSYAEEPAQTSYAEEPAQTSYSEEPAQTRYTGNELRSDMRKNQLRPDMPRNQLRPVMPRNQLRPDMPRNQPRPVILRNQLRPDMPRNQPRPVILRNQLRPDMLGNQLRPDMPGNQLRPDMLREPPAETSYAELVAQISYAELVTPTSYAELAAETGYFEPPAQTSYTEPAETNYADPAAQVSFDEPPAEASYADLAAEISYAELAAETSYADLAAQISYDEPPAETSYAELAAQISYSEPADQTSYAELAAQTSYSEPLAQTSYAELTSETSYCEQPVLNECKECGECFATVEDLGRHQKIYAREKFHDGKLFGEPVMQDLGLDGSPEEELEEQEEPEEPEDSIYGCKDCGLGFADRADLRDHQKVHGREYLVDSREYTHPAVHMPPVSEYQKDCLGEQLYECPACGESFVHSSFLFEHQKVHEQDQFYGHRRYEPFMQPLIVSPRRPQAPQKSAPAGVGPQCQVCGQDFIHASVLSEHARGHAGEGLPDQGQGGAGAAGPGPAPTEPQQDPGEEQRYECETCGESFPSQADLQEHMRVHEKGEPYDYGAAFVHTSFLTEPPKRDWPFYECKDCGKSFIHSTILTKHQKLHLQEEGAAAAAAATAQEAEANVLVPREVLRIQGSNVEAAEPEVEAAEPEVEAAEPEVEAAEPLGEAEGPEWEAAEPSGEAEQPHAEAEQPDMDADEPDGAGIEDPEERAEEPEGDDDEPDGAGIEDPEEEGEEQEIQVEEPYYDCGECGETFPSGAAYAEHLTAHASLVILEPAGLYGEGAGGPEGGRPDDELFKCDVCGQLFSDRLSLARHQNTHTG.

The SCAN box domain maps to H44 to Y126. Disordered regions lie at residues E127 to A194, D262 to A305, A321 to G371, and R392 to R423. Composition is skewed to basic and acidic residues over residues S160–P179, P291–A305, A321–P364, and H404–R423. The C2H2-type 1 zinc finger occupies Y451–H473. The interval S492 to F542 is disordered. Basic and acidic residues predominate over residues A513 to G528. 2 C2H2-type zinc fingers span residues Y555–H577 and Y610–H632. The C2H2-type 4; degenerate zinc finger occupies Y668–H690. Disordered regions lie at residues P704–G747, F764–Y797, and D820–R858. Residues M711–I720 are compositionally biased toward polar residues. The span at H846–I856 shows a compositional bias: basic residues. A C2H2-type 5 zinc finger spans residues Y884–H906. A run of 57 repeats spans residues P965–E973, P974–E982, P983–A991, P1001–E1009, P1010–P1018, P1028–A1036, P1046–E1054, P1055–P1063, P1073–A1081, P1091–E1099, P1109–E1117, P1118–P1126, P1136–E1144, P1145–E1153, P1154–E1162, P1163–E1171, P1172–E1180, P1190–E1198, P1199–E1207, P1217–P1225, P1235–E1243, P1253–E1261, P1280–E1288, P1289–E1297, P1298–E1306, P1307–E1315, P1316–E1324, P1325–E1333, P1334–E1342, P1343–E1351, P1352–E1360, P1361–E1369, P1370–E1378, P1379–E1387, P1388–E1396, P1397–E1405, P1406–E1414, P1415–E1423, P1424–E1432, P1433–E1441, P1442–E1450, P1451–E1459, P1460–E1468, P1469–E1477, P1478–E1486, P1496–E1504, P1505–E1513, P1514–E1522, P1523–E1531, P1532–E1540, P1541–E1549, P1550–E1558, P1559–E1567, P1568–E1576, P1577–E1585, P1586–E1594, and P1595–E1603. 2 stretches are compositionally biased toward polar residues: residues P965–T989 and P1001–A1020. The interval P965–E1603 is 37 X 9 AA repeat of P-A-Q-T-X-Y-X-X-E. Residues P965–R1651 are disordered. The span at P1046–T1079 shows a compositional bias: polar residues. Polar residues-rich tracts occupy residues E1107 to T1178, P1190 to K1206, P1217 to V1242, E1251 to T1484, and P1496 to S1601. The segment at N1859–Y1881 adopts a C2H2-type 6; degenerate zinc-finger fold. The disordered stretch occupies residues L1900–D1921. A compositionally biased stretch (acidic residues) spans S1905–D1921. 5 consecutive C2H2-type zinc fingers follow at residues Y1924–H1946, Y1980–H2002, P2040–H2062, Y2097–H2119, and Y2148–H2170. A disordered region spans residues A2059 to C2102. The tract at residues N2204–P2322 is disordered. 2 stretches are compositionally biased toward acidic residues: residues A2208–A2228 and E2257–Y2311. C2H2-type zinc fingers lie at residues Y2312–H2334 and F2363–H2385.

Belongs to the krueppel C2H2-type zinc-finger protein family. Homodimer. Interacts with SIAH1A and SIAH2. Interacts with TRAF2. Expressed at high levels in the cerebellum and at moderate levels in the testis and ovary.

The protein resides in the nucleus. It is found in the cytoplasm. In terms of biological role, induces apoptosis in cooperation with SIAH1A. Acts as a mediator between p53/TP53 and BAX in a neuronal death pathway that is activated by DNA damage. Acts synergistically with TRAF2 and inhibits TNF induced apoptosis through activation of NF-kappa-B. The polypeptide is Paternally-expressed gene 3 protein (PEG3) (Bos taurus (Bovine)).